The sequence spans 224 residues: Uridylate kinase (224 aa).

9–10 (GS) provides a ligand contact to ATP. Gly-43 is a binding site for UMP. Residues Gly-44 and Arg-48 each contribute to the ATP site. Residues Asp-65 and 113–119 (VVPGQTT) each bind UMP. ATP-binding residues include Thr-139, Phe-145, and Asp-148.

The protein belongs to the UMP kinase family. In terms of assembly, homohexamer.

It localises to the cytoplasm. It carries out the reaction UMP + ATP = UDP + ADP. Its pathway is pyrimidine metabolism; CTP biosynthesis via de novo pathway; UDP from UMP (UMPK route): step 1/1. Inhibited by UTP. Its function is as follows. Catalyzes the reversible phosphorylation of UMP to UDP. The protein is Uridylate kinase of Methanocella arvoryzae (strain DSM 22066 / NBRC 105507 / MRE50).